The following is a 406-amino-acid chain: Homocitrate synthase AksA (406 aa).

In terms of domain architecture, Pyruvate carboxyltransferase spans 32 to 285; it reads IYIYDTTLRD…DLGLNLEVLP (254 aa).

The protein belongs to the alpha-IPM synthase/homocitrate synthase family.

The enzyme catalyses acetyl-CoA + 2-oxoglutarate + H2O = (2R)-homocitrate + CoA + H(+). It catalyses the reaction 2-oxoadipate + acetyl-CoA + H2O = (R)-dihomocitrate + CoA + H(+). It carries out the reaction 2-oxoheptanedioate + acetyl-CoA + H2O = (R)-trihomocitrate + CoA + H(+). The protein operates within organic acid metabolism; 2-oxosuberate biosynthesis. Its function is as follows. Catalyzes the condensation of alpha-ketoglutarate and acetyl-CoA to form (R)-homocitrate. Can also catalyze the condensation of alpha-ketoadipate with acetyl-CoA to form (R)-homo(2)citrate, and the condensation of alpha-ketopimelate with acetyl-CoA to form (R)-homo(3)citrate. These reactions are part of the biosynthesis pathway of coenzyme B and biotin. This is Homocitrate synthase AksA (aksA) from Methanocaldococcus jannaschii (strain ATCC 43067 / DSM 2661 / JAL-1 / JCM 10045 / NBRC 100440) (Methanococcus jannaschii).